The chain runs to 272 residues: Putative phosphatase BU028/BU029 (272 aa).

Asp8 functions as the Nucleophile in the catalytic mechanism. Asp8 is a Mg(2+) binding site. A phosphate-binding site is contributed by Leu9. Mg(2+) is bound at residue Asp10. Residues 42-43 (SG) and Lys191 each bind phosphate. Asp214 provides a ligand contact to Mg(2+). Asn217 is a phosphate binding site.

It belongs to the HAD-like hydrolase superfamily. Cof family. Requires Mg(2+) as cofactor.

This is Putative phosphatase BU028/BU029 from Buchnera aphidicola subsp. Acyrthosiphon pisum (strain APS) (Acyrthosiphon pisum symbiotic bacterium).